Here is a 396-residue protein sequence, read N- to C-terminus: Elongation factor Tu 2 (396 aa).

Residues 10–206 (KPHVNVGTIG…AIDSYIPEPE (197 aa)) enclose the tr-type G domain. Residues 19-26 (GHIDHGKT) form a G1 region. GTP is bound at residue 19–26 (GHIDHGKT). Threonine 26 provides a ligand contact to Mg(2+). Positions 60–64 (GITIA) are G2. The tract at residues 81 to 84 (DCPG) is G3. GTP is bound by residues 81–85 (DCPGH) and 136–139 (NKCD). A G4 region spans residues 136–139 (NKCD). The tract at residues 174-176 (SAL) is G5.

The protein belongs to the TRAFAC class translation factor GTPase superfamily. Classic translation factor GTPase family. EF-Tu/EF-1A subfamily. Monomer.

The protein resides in the cytoplasm. It catalyses the reaction GTP + H2O = GDP + phosphate + H(+). In terms of biological role, GTP hydrolase that promotes the GTP-dependent binding of aminoacyl-tRNA to the A-site of ribosomes during protein biosynthesis. This is Elongation factor Tu 2 from Desulfotalea psychrophila (strain LSv54 / DSM 12343).